The chain runs to 257 residues: MDELFKAIILGIIQGITEFLPISSTAHLVITPWIFGWSGIVNSLSFDIAVHVGTLISLLYCFWKDWINIFFRERKMLLFIIIGTIPAGIAGIAFHDLIESALRHPLIIVVTLILVGFLMLYAEKVGKKLIRSITLSDAVVIGTAQAIALIPGVSRSGITITAGLFKGLDRAYAAKFSFLLSTPAIAGAAMLDFYKSIKIGHSHDYSLFIIGVISAAITGIIAIKFLLSFLQKYPLNLFIYYRWFLAVVIFLLYFFRN.

8 helical membrane-spanning segments follow: residues 4–24, 51–71, 78–98, 106–126, 133–153, 171–191, 207–227, and 235–255; these read LFKA…PISS, HVGT…NIFF, LFII…HDLI, LIIV…EKVG, ITLS…IPGV, AYAA…AAML, LFII…KFLL, and LNLF…LYFF.

This sequence belongs to the UppP family.

It localises to the cell inner membrane. It catalyses the reaction di-trans,octa-cis-undecaprenyl diphosphate + H2O = di-trans,octa-cis-undecaprenyl phosphate + phosphate + H(+). In terms of biological role, catalyzes the dephosphorylation of undecaprenyl diphosphate (UPP). Confers resistance to bacitracin. The sequence is that of Undecaprenyl-diphosphatase from Thermodesulfovibrio yellowstonii (strain ATCC 51303 / DSM 11347 / YP87).